Here is a 329-residue protein sequence, read N- to C-terminus: Deoxynucleotidyltransferase terminal-interacting protein 1 (329 aa).

Disordered stretches follow at residues 1–22 (MGAT…GGLE) and 147–178 (KRGR…ILSS). An important for dimerization region spans residues 56–147 (MTTSFTDPAI…RLTHELPGIK (92 aa)). Residues 147–158 (KRGRQAEEECAH) are compositionally biased toward basic and acidic residues. Positions 159-173 (RGSPLPKKRKGRPPG) form a DNA-binding region, a.T hook. The residue at position 161 (serine 161) is a Phosphoserine. A Nuclear localization signal motif is present at residues 164-170 (PKKRKGR). The segment at 197–316 (REGPKWDPAR…MRKYMETLRT (120 aa)) is important for DNA and nucleosome binding. A DNA-binding region (H-T-H motif) is located at residues 216–237 (GSRANKALGMGGTRGRIYIKHP).

Monomer and homodimer. A minor proportion may form homotrimers. Interacts with ZNF541. Interacts with the terminal deoxynucleotidyltransferase DNTT. Interacts with TRERF1. Identified in a histone deacetylase complex that contains DNTTIP1, HDAC1 and MIDEAS; this complex assembles into a tetramer that contains four copies of each protein chain. Component of a histone deacetylase complex containing DNTTIP1, ZNF541, HDAC1 and HDAC2. Identified in a complex with KCTD19, HDAC1, HDAC2 and ZNF541.

Its subcellular location is the nucleus. Increases DNTT terminal deoxynucleotidyltransferase activity (in vitro). Also acts as a transcriptional regulator, binding to the consensus sequence 5'-GNTGCATG-3' following an AT-tract. Associates with RAB20 promoter and positively regulates its transcription. Binds DNA and nucleosomes; may recruit HDAC1 complexes to nucleosomes or naked DNA. This is Deoxynucleotidyltransferase terminal-interacting protein 1 (DNTTIP1) from Pongo abelii (Sumatran orangutan).